Consider the following 701-residue polypeptide: MPKSNDDDVAQSEAVPLLDLVKPSLPISFPIKALQDLKSRSYFDSFHFQFNRSTVPFRRNSDCLPNRPRVLVCHDMKGGYVDDKWVQGCENEAGFAIWHWYLMDIFVYFSHSLVTIPPPCWTNTAHRHGVKVLGTFITEWDEGKATCKEMLATKESAQMYAERLAELATALGFDGWLINIENDIDEEQIPNMKEFVSHLKKVLHLSTPGALVIWYDSVTVRGNLQWQDQLTELNKPFFDLCDGIFMNYTWKESYPNLSAEVAGDRKFDVYMGIDVFGRGSFGGGQWTVNAALDLLKRNNVSAAIFAPGWVYETAQPPNFHTAQNKWWSLVEKSWGIVQTYPQVLPFYSDFNQGFGYHVSLEGRQLSDSPWYNISCQSLQPLLEFNEDNKDIIQVTVDQEGKNVFDFSEQHLNNYYEYDSAREASFNGGGNIVFRGKLKGDAYFTTRLFKPHLQLSSSPITISYSVKSDETSNLGILLSFSSPSLETKSILVAPEDPIRRFDDMSLQCLTTSVQTVSEWTVHEASLVMDGHTLTEISAFCYRPENSTKSAEFVALLGHISVKDHVQNQQNPEILLPASSWVIEAHNVELVPGNSSSKILRVKLEWRQKDLEDSAFTRYNVYAENVKSTDLRPRKVLEKPKSETVLLGIAHVPAYYVAELVVESDVKAVRFMVQACGEDASLGKLDEALNLLVDLEGLSVNHD.

It belongs to the glycosyl hydrolase 85 family.

It is found in the cytoplasm. It localises to the cytosol. It carries out the reaction an N(4)-(oligosaccharide-(1-&gt;3)-[oligosaccharide-(1-&gt;6)]-beta-D-Man-(1-&gt;4)-beta-D-GlcNAc-(1-&gt;4)-alpha-D-GlcNAc)-L-asparaginyl-[protein] + H2O = an oligosaccharide-(1-&gt;3)-[oligosaccharide-(1-&gt;6)]-beta-D-Man-(1-&gt;4)-D-GlcNAc + N(4)-(N-acetyl-beta-D-glucosaminyl)-L-asparaginyl-[protein]. Its function is as follows. Endoglycosidase that releases N-glycans from glycoproteins by cleaving the beta-1,4-glycosidic bond in the N,N'-diacetylchitobiose core. Involved in the production of high-mannose type N-glycans during plant development and fruit maturation. In Arabidopsis thaliana (Mouse-ear cress), this protein is Cytosolic endo-beta-N-acetylglucosaminidase 2.